Consider the following 708-residue polypeptide: ATP-dependent DNA helicase Hel308 (708 aa).

The Q motif signature appears at 1 to 29; it reads MSIDDLKLPSNVIDIIKNRGIKKLNPPQT. ATP is bound by residues Gln28 and 46–53; that span reads SPTGSGKT. Residues 33–196 enclose the Helicase ATP-binding domain; sequence KKGLLDGNRL…WLGAEPVATN (164 aa). The short motif at 145–148 is the DEAH box element; the sequence is DELH. The region spanning 229–435 is the Helicase C-terminal domain; that stretch reads HGDDAIIAYT…ERAFYTFLLG (207 aa).

It belongs to the helicase family. Hel308 subfamily. Monomer.

It catalyses the reaction Couples ATP hydrolysis with the unwinding of duplex DNA by translocating in the 3'-5' direction.. The catalysed reaction is ATP + H2O = ADP + phosphate + H(+). In terms of biological role, DNA-dependent ATPase and 3'-5' DNA helicase that may be involved in repair of stalled replication forks. The polypeptide is ATP-dependent DNA helicase Hel308 (Saccharolobus solfataricus (strain ATCC 35092 / DSM 1617 / JCM 11322 / P2) (Sulfolobus solfataricus)).